Consider the following 313-residue polypeptide: MYVSYLLDKDVSMYPSSVRHSGGLNLAPQNFVSPPQYPDYGGYHVAAAAAAAANLDSAQSPGPSWSTAYGAPLREDWNGYPPGGAAAANAVAHGLNGGSPAAAMGYSSPADYHAHHHPHHHPHHPAAAPSCASGLLQTLNPGPPGPAATGAAEQLSPSGQRRNLCEWMRKPAQPSLGSQVKTRTKDKYRVVYTDHQRLELEKEFHYSRYITIRRKAELAATLGLSERQVKIWFQNRRAKERKINKKKLQQQQQQQQQQQLASPPPQPSQPQPGSLRSVPEPLSPVSSLQGSVPGSVPGVLGPAGGVLNPTVTQ.

S60 is modified (phosphoserine). The disordered stretch occupies residues 113 to 153; that stretch reads HAHHHPHHHPHHPAAAPSCASGLLQTLNPGPPGPAATGAAE. The span at 114–124 shows a compositional bias: basic residues; it reads AHHHPHHHPHH. The interval 185–215 is interaction with DNA; sequence KDKYRVVYTDHQRLELEKEFHYSRYITIRRK. Residues 185–244 constitute a DNA-binding region (homeobox); that stretch reads KDKYRVVYTDHQRLELEKEFHYSRYITIRRKAELAATLGLSERQVKIWFQNRRAKERKIN. The tract at residues 227–241 is interaction with 5-mCpG DNA; sequence RQVKIWFQNRRAKER. The disordered stretch occupies residues 242–313; it reads KINKKKLQQQ…GGVLNPTVTQ (72 aa). Composition is skewed to low complexity over residues 249-261 and 271-300; these read QQQQQQQQQQQLA and QPGSLRSVPEPLSPVSSLQGSVPGSVPGVL. At S283 the chain carries Phosphoserine. The 4S motif; modulates transactivation activity and protein stability signature appears at 283 to 295; it reads SPVSSLQGSVPGS.

The protein belongs to the Caudal homeobox family. As to quaternary structure, can bind DNA as a monomer or homodimer. In terms of processing, ubiquitinated, leading to its degradation by the proteasome. Post-translationally, phosphorylation at Ser-60 reduces transactivation capacity. Phosphorylation at Ser-283 reduces transactivation capacity and also increases ubiquitin-dependent proteasome degradation. In terms of tissue distribution, expressed in the intestine.

The protein resides in the nucleus. Transcription factor which regulates the transcription of multiple genes expressed in the intestinal epithelium. Binds to the promoter of the intestinal sucrase-isomaltase SI and activates SI transcription. Binds to the DNA sequence 5'-ATAAAAACTTAT-3' in the promoter region of VDR and activates VDR transcription. Binds to and activates transcription of LPH. Activates transcription of CLDN2 and intestinal mucin MUC2. Binds to the 5'-AATTTTTTACAACACCT-3' DNA sequence in the promoter region of CA1 and activates CA1 transcription. Important in broad range of functions from early differentiation to maintenance of the intestinal epithelial lining of both the small and large intestine. Binds preferentially to methylated DNA. This is Homeobox protein CDX-2 (CDX2) from Mesocricetus auratus (Golden hamster).